The following is a 321-amino-acid chain: Ribose-phosphate pyrophosphokinase (321 aa).

Residues 44–46 (DGE) and 103–104 (RQ) contribute to the ATP site. Residues His137 and Asp179 each coordinate Mg(2+). Lys202 is a catalytic residue. D-ribose 5-phosphate is bound by residues Arg204, Asp228, and 232 to 236 (DTAGT).

The protein belongs to the ribose-phosphate pyrophosphokinase family. Class I subfamily. As to quaternary structure, homohexamer. The cofactor is Mg(2+).

The protein localises to the cytoplasm. The catalysed reaction is D-ribose 5-phosphate + ATP = 5-phospho-alpha-D-ribose 1-diphosphate + AMP + H(+). Its pathway is metabolic intermediate biosynthesis; 5-phospho-alpha-D-ribose 1-diphosphate biosynthesis; 5-phospho-alpha-D-ribose 1-diphosphate from D-ribose 5-phosphate (route I): step 1/1. Involved in the biosynthesis of the central metabolite phospho-alpha-D-ribosyl-1-pyrophosphate (PRPP) via the transfer of pyrophosphoryl group from ATP to 1-hydroxyl of ribose-5-phosphate (Rib-5-P). The protein is Ribose-phosphate pyrophosphokinase of Staphylococcus haemolyticus (strain JCSC1435).